Consider the following 125-residue polypeptide: Small ribosomal subunit protein bS6 (125 aa).

This sequence belongs to the bacterial ribosomal protein bS6 family.

Its function is as follows. Binds together with bS18 to 16S ribosomal RNA. This chain is Small ribosomal subunit protein bS6, found in Campylobacter jejuni (strain RM1221).